A 784-amino-acid chain; its full sequence is Rabenosyn-5 (784 aa).

An N-acetylalanine modification is found at Ala-2. Phosphoserine is present on Ser-3. A C2H2-type zinc finger spans residues 14-37; the sequence is FLCPLCLKDLQSFYQLHSHYEEEH. Residues 100 to 263 are necessary for the correct targeting to endosomes; it reads RSHLSDFKKH…HCKDTLLKRE (164 aa). Residues 157–260 form an FYVE-type zinc finger; the sequence is DQDVPFCPDC…CCTHCKDTLL (104 aa). Positions 163, 166, 179, 182, 187, and 190 each coordinate Zn(2+). The segment covering 207–224 has biased composition (polar residues); it reads KESLSTHTSPSQSPNSVH. Residues 207–241 form a disordered region; sequence KESLSTHTSPSQSPNSVHGSRRGSISSMSSVSSVL. A phosphoserine mark is found at Ser-215, Ser-219, Ser-226, and Ser-230. The segment covering 228–240 has biased composition (low complexity); the sequence is RGSISSMSSVSSV. Cys-252 and Cys-255 together coordinate Zn(2+). The interval 264 to 500 is necessary for interaction with RAB4A; the sequence is QQIDEKEHTP…QLQDEYDQQQ (237 aa). The interval 264-784 is necessary for interaction with EHD1; it reads QQIDEKEHTP…TLAKQKGGTD (521 aa). 2 coiled-coil regions span residues 378 to 414 and 472 to 531; these read TKEQ…LEER and QAKA…RELE. Residues 390 to 400 show a composition bias toward basic and acidic residues; that stretch reads KEEMERKRAVE. The interval 390–429 is disordered; the sequence is KEEMERKRAVERQAALESQRRLEERQSGLASRAANGEVAS. The region spanning 496-515 is the UIM domain; it reads YDQQQTEKAIELSRRQAEEE. Residues 574 to 732 form a disordered region; it reads DLGSSPVPSS…DSDSGPEAEE (159 aa). Over residues 579-598 the composition is skewed to polar residues; that stretch reads PVPSSTAPKTPSLSSTQPTR. Residues 627–784 are necessary for interaction with RAB5A; the sequence is PFDEEDLSSP…TLAKQKGGTD (158 aa). Residues 663-673 are compositionally biased toward acidic residues; that stretch reads PFEEEDEEEEA. The residue at position 684 (Ser-684) is a Phosphoserine. Positions 722–732 are enriched in acidic residues; the sequence is MDSDSGPEAEE.

As to quaternary structure, interacts with EHD1, RAB4A, RAB5A, RAB14, RAB22A, RAB24 and VPS45. Binds simultaneously to RAB4A and RAB5A in vitro. Interacts with RAB4A and RAB5A that has been activated by GTP binding.

It localises to the cell membrane. The protein localises to the early endosome membrane. Its function is as follows. Rab4/Rab5 effector protein acting in early endocytic membrane fusion and membrane trafficking of recycling endosomes. Required for endosome fusion either homotypically or with clathrin coated vesicles. Plays a role in the lysosomal trafficking of CTSD/cathepsin D from the Golgi to lysosomes. Also promotes the recycling of transferrin directly from early endosomes to the plasma membrane. Binds phospholipid vesicles containing phosphatidylinositol 3-phosphate (PtdInsP3). Plays a role in the recycling of transferrin receptor to the plasma membrane. The protein is Rabenosyn-5 of Homo sapiens (Human).